Consider the following 304-residue polypeptide: N-acetylmuramic acid 6-phosphate etherase (304 aa).

Residues isoleucine 62 to lysine 225 form the SIS domain. Glutamate 90 (proton donor) is an active-site residue. Residue glutamate 121 is part of the active site.

This sequence belongs to the GCKR-like family. MurNAc-6-P etherase subfamily. As to quaternary structure, homodimer.

It catalyses the reaction N-acetyl-D-muramate 6-phosphate + H2O = N-acetyl-D-glucosamine 6-phosphate + (R)-lactate. It participates in amino-sugar metabolism; 1,6-anhydro-N-acetylmuramate degradation. It functions in the pathway amino-sugar metabolism; N-acetylmuramate degradation. Its pathway is cell wall biogenesis; peptidoglycan recycling. Its function is as follows. Specifically catalyzes the cleavage of the D-lactyl ether substituent of MurNAc 6-phosphate, producing GlcNAc 6-phosphate and D-lactate. Together with AnmK, is also required for the utilization of anhydro-N-acetylmuramic acid (anhMurNAc) either imported from the medium or derived from its own cell wall murein, and thus plays a role in cell wall recycling. This Actinobacillus pleuropneumoniae serotype 5b (strain L20) protein is N-acetylmuramic acid 6-phosphate etherase.